The chain runs to 93 residues: Small ribosomal subunit protein uS15 (93 aa).

The protein belongs to the universal ribosomal protein uS15 family. In terms of assembly, part of the 30S ribosomal subunit. Forms a bridge to the 50S subunit in the 70S ribosome, contacting the 23S rRNA.

Functionally, one of the primary rRNA binding proteins, it binds directly to 16S rRNA where it helps nucleate assembly of the platform of the 30S subunit by binding and bridging several RNA helices of the 16S rRNA. Its function is as follows. Forms an intersubunit bridge (bridge B4) with the 23S rRNA of the 50S subunit in the ribosome. The protein is Small ribosomal subunit protein uS15 of Anaplasma phagocytophilum (strain HZ).